The following is a 317-amino-acid chain: Protein phosphatase 1 regulatory subunit 3C-B (317 aa).

Positions 150–258 (RNRLKKNLVC…NNDGKNYKLV (109 aa)) constitute a CBM21 domain.

Interacts with PPP1CC catalytic subunit of PP1 and associates with glycogen. Forms complexes with glycogen phosphorylase, glycogen synthase and phosphorylase kinase which is necessary for its regulation of PP1 activity.

In terms of biological role, acts as a glycogen-targeting subunit for PP1 and regulates its activity. Activates glycogen synthase, reduces glycogen phosphorylase activity and limits glycogen breakdown. The polypeptide is Protein phosphatase 1 regulatory subunit 3C-B (ppp1r3cb) (Danio rerio (Zebrafish)).